A 360-amino-acid polypeptide reads, in one-letter code: Mannan endo-1,4-beta-mannosidase (360 aa).

An N-terminal signal peptide occupies residues 1–24 (MLKKLAVCLSIVLLLLGAASPISA). The GH26 domain maps to 36–347 (QTTKDIMNWL…YQNSWTLNKG (312 aa)). Residue H129 participates in substrate binding. The active-site Proton donor is E191. Positions 196 and 266 each coordinate substrate. Catalysis depends on E290, which acts as the Nucleophile.

This sequence belongs to the glycosyl hydrolase 26 family. As to quaternary structure, homodimer.

The protein localises to the secreted. The catalysed reaction is Random hydrolysis of (1-&gt;4)-beta-D-mannosidic linkages in mannans, galactomannans and glucomannans.. Functionally, involved in the degradation of glucomannan. Catalyzes the endo hydrolysis of beta-1,4-linked mannan, galactomannan and glucomannan. This chain is Mannan endo-1,4-beta-mannosidase, found in Bacillus subtilis.